We begin with the raw amino-acid sequence, 380 residues long: Cytochrome b (380 aa).

The next 4 helical transmembrane spans lie at 34 to 54 (FGSL…LLAA), 78 to 99 (WLIR…YMHI), 114 to 134 (WNTG…GYVL), and 179 to 199 (FFTL…IHLT). Residues histidine 84 and histidine 98 each contribute to the heme b site. Residues histidine 183 and histidine 197 each coordinate heme b. Histidine 202 is an a ubiquinone binding site. 4 consecutive transmembrane segments (helical) span residues 227-247 (LKDT…ALFS), 289-309 (LGGV…PLLH), 321-341 (LSQL…WVGS), and 348-368 (FIII…ILFP).

This sequence belongs to the cytochrome b family. The cytochrome bc1 complex contains 11 subunits: 3 respiratory subunits (MT-CYB, CYC1 and UQCRFS1), 2 core proteins (UQCRC1 and UQCRC2) and 6 low-molecular weight proteins (UQCRH/QCR6, UQCRB/QCR7, UQCRQ/QCR8, UQCR10/QCR9, UQCR11/QCR10 and a cleavage product of UQCRFS1). This cytochrome bc1 complex then forms a dimer. Heme b serves as cofactor.

Its subcellular location is the mitochondrion inner membrane. Component of the ubiquinol-cytochrome c reductase complex (complex III or cytochrome b-c1 complex) that is part of the mitochondrial respiratory chain. The b-c1 complex mediates electron transfer from ubiquinol to cytochrome c. Contributes to the generation of a proton gradient across the mitochondrial membrane that is then used for ATP synthesis. The chain is Cytochrome b (MT-CYB) from Balearica regulorum (Grey crowned-crane).